A 213-amino-acid chain; its full sequence is Maleylacetoacetate isomerase (213 aa).

In terms of domain architecture, GST N-terminal spans 3-84 (NETVLYDYWR…YLAETRDGTG (82 aa)). The GST C-terminal domain occupies 89–213 (HPIDRQRVRA…QRAHPDRAKP (125 aa)).

Belongs to the GST superfamily. Zeta family.

The enzyme catalyses 4-maleylacetoacetate = 4-fumarylacetoacetate. It functions in the pathway amino-acid degradation; L-phenylalanine degradation; acetoacetate and fumarate from L-phenylalanine: step 5/6. This Rhizobium meliloti (strain 1021) (Ensifer meliloti) protein is Maleylacetoacetate isomerase (maiA).